The chain runs to 220 residues: MELLTQLLQALWAQDFETLANPSMIGMLYFVLFVILFLENGLLPAAFLPGDSLLVLVGVLIAKGAMGYPQTILLLTVAASLGCWVSYIQGRWLGNTRTVQNWLSHLPAHYHQRAHHLFHKHGLSALLIGRFIAFVRTLLPTIAGLSGLNNARFQFFNWMSGLLWVLILTTLGYMLGKTPVFLKYEDQLMSCLMLLPVVLLVFGLAGSLVVLWKKKYGNRG.

Over 1-27 the chain is Periplasmic; that stretch reads MELLTQLLQALWAQDFETLANPSMIGM. Residues 28–48 form a helical membrane-spanning segment; it reads LYFVLFVILFLENGLLPAAFL. At 49–52 the chain is on the cytoplasmic side; it reads PGDS. Helical transmembrane passes span 53-73 and 74-94; these read LLVLVGVLIAKGAMGYPQTIL and LLTVAASLGCWVSYIQGRWLG. The Cytoplasmic portion of the chain corresponds to 95–154; the sequence is NTRTVQNWLSHLPAHYHQRAHHLFHKHGLSALLIGRFIAFVRTLLPTIAGLSGLNNARFQ. A helical transmembrane segment spans residues 155-175; that stretch reads FFNWMSGLLWVLILTTLGYML. The Periplasmic portion of the chain corresponds to 176-191; that stretch reads GKTPVFLKYEDQLMSC. Residues 192–212 form a helical membrane-spanning segment; it reads LMLLPVVLLVFGLAGSLVVLW. At 213–220 the chain is on the cytoplasmic side; the sequence is KKKYGNRG.

This sequence belongs to the DedA family.

The protein localises to the cell inner membrane. May be a membrane transporter required for proton motive force (PMF)-dependent drug efflux. Required, with YghB, for the proper export of certain periplasmic amidases and, possibly, other Tat substrates. May play a role in determining membrane lipid composition. This chain is Inner membrane protein YqjA (yqjA), found in Escherichia coli (strain K12).